The chain runs to 56 residues: Large ribosomal subunit protein eL40 (56 aa).

It belongs to the eukaryotic ribosomal protein eL40 family.

The sequence is that of Large ribosomal subunit protein eL40 from Metallosphaera sedula (strain ATCC 51363 / DSM 5348 / JCM 9185 / NBRC 15509 / TH2).